The sequence spans 362 residues: Aminomethyltransferase (362 aa).

Belongs to the GcvT family. In terms of assembly, the glycine cleavage system is composed of four proteins: P, T, L and H.

It carries out the reaction N(6)-[(R)-S(8)-aminomethyldihydrolipoyl]-L-lysyl-[protein] + (6S)-5,6,7,8-tetrahydrofolate = N(6)-[(R)-dihydrolipoyl]-L-lysyl-[protein] + (6R)-5,10-methylene-5,6,7,8-tetrahydrofolate + NH4(+). In terms of biological role, the glycine cleavage system catalyzes the degradation of glycine. The chain is Aminomethyltransferase from Chromobacterium violaceum (strain ATCC 12472 / DSM 30191 / JCM 1249 / CCUG 213 / NBRC 12614 / NCIMB 9131 / NCTC 9757 / MK).